Reading from the N-terminus, the 382-residue chain is Succinate--CoA ligase [ADP-forming] subunit beta (382 aa).

ATP-binding positions include Lys46, 53-55, Val95, and Glu100; that span reads GRG. Residues Asn192 and Asp206 each contribute to the Mg(2+) site. Substrate-binding positions include Asn257 and 314–316; that span reads GIT.

It belongs to the succinate/malate CoA ligase beta subunit family. In terms of assembly, heterotetramer of two alpha and two beta subunits. It depends on Mg(2+) as a cofactor.

It catalyses the reaction succinate + ATP + CoA = succinyl-CoA + ADP + phosphate. The enzyme catalyses GTP + succinate + CoA = succinyl-CoA + GDP + phosphate. Its pathway is carbohydrate metabolism; tricarboxylic acid cycle; succinate from succinyl-CoA (ligase route): step 1/1. In terms of biological role, succinyl-CoA synthetase functions in the citric acid cycle (TCA), coupling the hydrolysis of succinyl-CoA to the synthesis of either ATP or GTP and thus represents the only step of substrate-level phosphorylation in the TCA. The beta subunit provides nucleotide specificity of the enzyme and binds the substrate succinate, while the binding sites for coenzyme A and phosphate are found in the alpha subunit. The chain is Succinate--CoA ligase [ADP-forming] subunit beta from Bacteroides fragilis (strain ATCC 25285 / DSM 2151 / CCUG 4856 / JCM 11019 / LMG 10263 / NCTC 9343 / Onslow / VPI 2553 / EN-2).